A 307-amino-acid polypeptide reads, in one-letter code: Ribosomal protein L11 methyltransferase (307 aa).

Thr144, Gly165, Asp187, and Asn235 together coordinate S-adenosyl-L-methionine.

This sequence belongs to the methyltransferase superfamily. PrmA family.

The protein resides in the cytoplasm. It carries out the reaction L-lysyl-[protein] + 3 S-adenosyl-L-methionine = N(6),N(6),N(6)-trimethyl-L-lysyl-[protein] + 3 S-adenosyl-L-homocysteine + 3 H(+). In terms of biological role, methylates ribosomal protein L11. This chain is Ribosomal protein L11 methyltransferase, found in Psychrobacter sp. (strain PRwf-1).